A 345-amino-acid chain; its full sequence is NADPH dehydrogenase (345 aa).

23 to 26 is a binding site for FMN; sequence SPMC. Tyr-28 is a binding site for substrate. FMN-binding residues include Ala-60 and Gln-102. 164–167 serves as a coordination point for substrate; that stretch reads HGAH. Residues Arg-215 and 307-308 each bind FMN; that span reads GR.

This sequence belongs to the NADH:flavin oxidoreductase/NADH oxidase family. NamA subfamily. Homotetramer. The cofactor is FMN.

The catalysed reaction is A + NADPH + H(+) = AH2 + NADP(+). Functionally, catalyzes the reduction of the double bond of an array of alpha,beta-unsaturated aldehydes and ketones. It also reduces the nitro group of nitroester and nitroaromatic compounds. It could have a role in detoxification processes. This chain is NADPH dehydrogenase, found in Bacillus cereus (strain ZK / E33L).